Consider the following 209-residue polypeptide: Uridine kinase (209 aa).

12-19 lines the ATP pocket; sequence GGSASGKT.

Belongs to the uridine kinase family.

The protein localises to the cytoplasm. The catalysed reaction is uridine + ATP = UMP + ADP + H(+). The enzyme catalyses cytidine + ATP = CMP + ADP + H(+). Its pathway is pyrimidine metabolism; CTP biosynthesis via salvage pathway; CTP from cytidine: step 1/3. It participates in pyrimidine metabolism; UMP biosynthesis via salvage pathway; UMP from uridine: step 1/1. The protein is Uridine kinase of Chloroflexus aurantiacus (strain ATCC 29366 / DSM 635 / J-10-fl).